Reading from the N-terminus, the 976-residue chain is Alpha-amylase (976 aa).

An N-terminal signal peptide occupies residues 1–33; it reads MKRGKLWGRLVSAAGLSLSIFLSSIGNVSTAYA. A disordered region spans residues 45–98; the sequence is TKENTESATDASSNEASDAEADNDTDEAITDASSKELSAENDGASESDSSFDEY. A compositionally biased stretch (low complexity) spans 50–60; that stretch reads ESATDASSNEA. Composition is skewed to acidic residues over residues 61–73 and 87–96; these read SDAE…DEAI and GASESDSSFD. Residues N243, T284, and D293 each contribute to the Ca(2+) site. The Nucleophile role is filled by D323. H327 contributes to the Ca(2+) binding site. E375 serves as the catalytic Proton donor.

It belongs to the glycosyl hydrolase 13 family. In terms of assembly, monomer. The cofactor is Ca(2+).

It carries out the reaction Endohydrolysis of (1-&gt;4)-alpha-D-glucosidic linkages in polysaccharides containing three or more (1-&gt;4)-alpha-linked D-glucose units.. The protein is Alpha-amylase (amyA) of Butyrivibrio fibrisolvens.